The chain runs to 539 residues: Chaperonin GroEL (539 aa).

Residues 29–32 (TLGP), 86–90 (DGTTT), G413, 476–478 (NAA), and D492 each bind ATP.

Belongs to the chaperonin (HSP60) family. Forms a cylinder of 14 subunits composed of two heptameric rings stacked back-to-back. Interacts with the co-chaperonin GroES.

Its subcellular location is the cytoplasm. It catalyses the reaction ATP + H2O + a folded polypeptide = ADP + phosphate + an unfolded polypeptide.. In terms of biological role, together with its co-chaperonin GroES, plays an essential role in assisting protein folding. The GroEL-GroES system forms a nano-cage that allows encapsulation of the non-native substrate proteins and provides a physical environment optimized to promote and accelerate protein folding. This is Chaperonin GroEL from Parageobacillus thermoglucosidasius (Geobacillus thermoglucosidasius).